An 879-amino-acid polypeptide reads, in one-letter code: Phosphoinositide 3-kinase regulatory subunit 5 (879 aa).

Residues 23-100 are heterodimerization; sequence SGSTDISSNW…APYIPETSDL (78 aa). 2 disordered regions span residues 314–345 and 570–590; these read SLED…PKQD and SSST…PSPS. Positions 315–336 are enriched in acidic residues; the sequence is LEDDVTEEDEEVDFEEVDDKDE. Residues 570–589 are compositionally biased toward polar residues; it reads SSSTNAPMTNAESPLKSPSP. The tract at residues 651–751 is interaction with beta-gamma G protein dimers; sequence PILADMVLYY…WSNGEKVCTS (101 aa).

Heterodimer. Interacts with a catalytic subunit and with beta-gamma G protein dimers.

The protein localises to the nucleus. It is found in the cytoplasm. Its subcellular location is the cell membrane. Greatly activated by G gamma proteins. In terms of biological role, regulatory subunit of the PI3K gamma complex. Required for recruitment of the catalytic subunit to the plasma membrane via interaction with beta-gamma G protein dimers. Required for G protein-mediated activation of PIK3CG. This is Phosphoinositide 3-kinase regulatory subunit 5 (pik3r5) from Xenopus laevis (African clawed frog).